A 77-amino-acid chain; its full sequence is Pollen allergen Amb p 5b (77 aa).

Residues 1 to 22 (MNNEKNVSFEFIGSTNEVDEIK) form the signal peptide. 3 disulfides stabilise this stretch: Cys26–Cys61, Cys33–Cys48, and Cys40–Cys54.

The protein resides in the secreted. The sequence is that of Pollen allergen Amb p 5b from Ambrosia psilostachya (Western ragweed).